The following is a 704-amino-acid chain: Glycine--tRNA ligase beta subunit (704 aa).

It belongs to the class-II aminoacyl-tRNA synthetase family. Tetramer of two alpha and two beta subunits.

The protein localises to the cytoplasm. It catalyses the reaction tRNA(Gly) + glycine + ATP = glycyl-tRNA(Gly) + AMP + diphosphate. This Delftia acidovorans (strain DSM 14801 / SPH-1) protein is Glycine--tRNA ligase beta subunit.